The sequence spans 532 residues: Phosphoenolpyruvate carboxykinase (ATP) (532 aa).

Substrate contacts are provided by R60, Y194, and K200. ATP contacts are provided by residues K200, H219, and 237-245 (GLSGTGKTT). Mn(2+) contacts are provided by K200 and H219. D258 provides a ligand contact to Mn(2+). ATP is bound by residues E286, R324, and T449. Position 324 (R324) interacts with substrate.

This sequence belongs to the phosphoenolpyruvate carboxykinase (ATP) family. The cofactor is Mn(2+).

It is found in the cytoplasm. The catalysed reaction is oxaloacetate + ATP = phosphoenolpyruvate + ADP + CO2. Its pathway is carbohydrate biosynthesis; gluconeogenesis. Functionally, involved in the gluconeogenesis. Catalyzes the conversion of oxaloacetate (OAA) to phosphoenolpyruvate (PEP) through direct phosphoryl transfer between the nucleoside triphosphate and OAA. The polypeptide is Phosphoenolpyruvate carboxykinase (ATP) (Cereibacter sphaeroides (strain ATCC 17025 / ATH 2.4.3) (Rhodobacter sphaeroides)).